Here is a 105-residue protein sequence, read N- to C-terminus: Vacuolar ATPase assembly integral membrane protein VMA21 homolog (105 aa).

Residues 1–26 form a disordered region; sequence MSTKNKKAAGGNGVAPKQTRQQSHDS. Topologically, residues 1–36 are cytoplasmic; it reads MSTKNKKAAGGNGVAPKQTRQQSHDSQDYSSFKTVL. Residues 37–57 traverse the membrane as a helical segment; that stretch reads FYCMLIVFLPVLTFFVLKGFV. Topologically, residues 58 to 68 are lumenal; it reads LDQFLDISEVK. Residues 69-89 traverse the membrane as a helical segment; the sequence is VNIASAVGAVVALHIALGLYI. Residues 90-105 are Cytoplasmic-facing; it reads YRAYFGAPGSKGSKTD.

Belongs to the VMA21 family.

It is found in the endoplasmic reticulum membrane. The protein resides in the endoplasmic reticulum-Golgi intermediate compartment membrane. Its subcellular location is the cytoplasmic vesicle. It localises to the COPII-coated vesicle membrane. Its function is as follows. Required for the assembly of the V0 complex of the vacuolar ATPase (V-ATPase) in the endoplasmic reticulum. The polypeptide is Vacuolar ATPase assembly integral membrane protein VMA21 homolog (Drosophila melanogaster (Fruit fly)).